The following is an 891-amino-acid chain: Probable serine/threonine-protein kinase mkcC (891 aa).

5 disordered regions span residues 24–70 (IELN…TATI), 85–121 (ANNNTNQLNKSTSSSSSLNNNKNEDNKSVTASIAPSS), 264–435 (DDPQ…AREK), 495–526 (NSLGSSINKNNSNNTTTTTTTTNTNNKSPEVS), and 565–588 (TTASQSSQAPYHPSHNGNEEDDYD). A compositionally biased stretch (low complexity) spans 29 to 41 (QEEQQQPEQQEQP). Basic and acidic residues predominate over residues 45-58 (EELKDNNEKIKTSE). Low complexity-rich tracts occupy residues 61–70 (TTTTTTTATI), 86–105 (NNNTNQLNKSTSSSSSLNNN), 297–314 (STSNTTGKNTGKNSTTGK), 322–360 (SNSSNVPPSPVLASSASPSPKLKSSSSSIRNSGAISGTS), and 379–397 (TTGNSTTTTTTTTSTTTSS). The segment covering 422–432 (RKRKEQKRSRA) has biased composition (basic residues). The span at 495 to 522 (NSLGSSINKNNSNNTTTTTTTTNTNNKS) shows a compositional bias: low complexity. Residues 616-864 (YKNLKQIGSG…AEQLLKHPWI (249 aa)) enclose the Protein kinase domain. Residues 622–630 (IGSGGFGSV) and lysine 645 contribute to the ATP site. Aspartate 735 serves as the catalytic Proton acceptor.

This sequence belongs to the protein kinase superfamily. STE Ser/Thr protein kinase family. STE20 subfamily. Requires Mg(2+) as cofactor.

It carries out the reaction L-seryl-[protein] + ATP = O-phospho-L-seryl-[protein] + ADP + H(+). The catalysed reaction is L-threonyl-[protein] + ATP = O-phospho-L-threonyl-[protein] + ADP + H(+). The chain is Probable serine/threonine-protein kinase mkcC from Dictyostelium discoideum (Social amoeba).